Consider the following 1284-residue polypeptide: Neurexin-4 (1284 aa).

The first 35 residues, methionine 1 to alanine 35, serve as a signal peptide directing secretion. Residues aspartate 36–serine 1217 lie on the Extracellular side of the membrane. Residues cysteine 47–cysteine 185 enclose the F5/8 type C domain. The cysteines at positions 47 and 185 are disulfide-linked. Asparagine 195, asparagine 329, asparagine 340, and asparagine 398 each carry an N-linked (GlcNAc...) asparagine glycan. In terms of domain architecture, Laminin G-like 1 spans phenylalanine 220–cysteine 369. Cysteines 333 and 369 form a disulfide. One can recognise a Laminin G-like 2 domain in the interval phenylalanine 403–cysteine 540. Cystine bridges form between cysteine 507-cysteine 540, cysteine 546-cysteine 557, cysteine 551-cysteine 566, and cysteine 568-cysteine 578. Residues methionine 542–histidine 579 enclose the EGF-like 1 domain. N-linked (GlcNAc...) asparagine glycosylation occurs at asparagine 668. A Laminin G-like 3 domain is found at phenylalanine 824–cysteine 962. 4 cysteine pairs are disulfide-bonded: cysteine 934/cysteine 962, cysteine 966/cysteine 977, cysteine 971/cysteine 986, and cysteine 988/cysteine 998. An EGF-like 2 domain is found at cysteine 962 to alanine 999. N-linked (GlcNAc...) asparagine glycosylation occurs at asparagine 974. The 152-residue stretch at phenylalanine 1032 to cysteine 1183 folds into the Laminin G-like 4 domain. Residues asparagine 1047 and asparagine 1137 are each glycosylated (N-linked (GlcNAc...) asparagine). A disulfide bridge connects residues cysteine 1147 and cysteine 1183. Residues valine 1218–isoleucine 1238 form a helical membrane-spanning segment. The Cytoplasmic segment spans residues glycine 1239–isoleucine 1284.

This sequence belongs to the neurexin family. Forms a complex with Nrg and Cont. Forms a complex composed of septa junction proteins Nrx-IV/Nrx, Tsf2/MTf, Cont and Nrg during late embryogenesis. The C-terminal region interacts with coracle. Interacts with Patj in cis form. In terms of tissue distribution, found in septate junctions of epithelial and glial cells.

Its subcellular location is the cell membrane. The protein resides in the cell junction. It localises to the septate junction. Its function is as follows. Seems to play a role in the formation and function of septate junctions. Septate junctions, which are the equivalent of vertebrates tight junctions, are characterized by regular arrays of transverse structures that span the intermembrane space and form a physical barrier to diffusion. Required for the blood-brain barrier formation. The protein is Neurexin-4 (Nrx-IV) of Drosophila melanogaster (Fruit fly).